Reading from the N-terminus, the 719-residue chain is MALCAYAFPGILNRTVAVASDASKPTPLFSEWIHGTDLQFQFHQKLTQVKKRSRTVQASLSESGEYYTQRPPTPIVDTINYPIHMKNLSLKELKQLADELRSDTIFNVSKTGGHLGSSLGVVELTVALHYVFNAPQDRILWDVGHQSYPHKILTGRREKMSTLRQTNGLAGFTKRSESEYDCFGTGHSSTTISAGLGMAVGRDLKGRNNNVIAVIGDGAMTAGQAYEAMNNAGYLDSDMIVILNDNRQVSLPTATLDGPVPPVGALSSALSRLQSNRPLRELREVAKGVTKQIGGPMHELAAKVDEYARGMISGSGSTLFEELGLYYIGPVDGHNIDDLISILKEVRSTKTTGPVLIHVVTEKGRGYPYAERAADKYHGVAKFDPATGKQFKGSAKTQSYTTYFAEALIAEAEADKDIVAIHAAMGGGTGMNLFLRRFPTRCFDVGIAEQHAVTFAAGLACEGLKPFCAIYSSFMQRAYDQVVHDVDLQKLPVRFAMDRAGLVGADGPTHCGAFDVTFMACLPNMVVMAPSDEAELFHIVATAAAIDDRPSCFRYPRGNGIGVELPAGNKGIPLEVGKGRILVEGERVALLGYGSAVQNCLAAASVLESRGLQVTVADARFCKPLDRALIRSLAKSHEVLVTVEKGSIGGFGSHVVQFMALDGLLDGKLKWRPIVLPDRYIDHGSPADQLAEAGLTPSHIAATVFNILGQTREALEVMT.

Residues Met1–Gln57 constitute a chloroplast transit peptide. Residues His145 and Gly186–Ser188 each bind thiamine diphosphate. Asp217 contributes to the Mg(2+) binding site. Thiamine diphosphate-binding positions include Gly218 to Ala219, Asn246, Tyr367, and Glu449. Asn246 serves as a coordination point for Mg(2+).

Belongs to the transketolase family. DXPS subfamily. In terms of assembly, homodimer. The cofactor is Mg(2+). Thiamine diphosphate is required as a cofactor.

The protein resides in the plastid. The protein localises to the chloroplast. The catalysed reaction is D-glyceraldehyde 3-phosphate + pyruvate + H(+) = 1-deoxy-D-xylulose 5-phosphate + CO2. Its pathway is metabolic intermediate biosynthesis; 1-deoxy-D-xylulose 5-phosphate biosynthesis; 1-deoxy-D-xylulose 5-phosphate from D-glyceraldehyde 3-phosphate and pyruvate: step 1/1. Its function is as follows. Catalyzes the acyloin condensation reaction between C atoms 2 and 3 of pyruvate and glyceraldehyde 3-phosphate to yield 1-deoxy-D-xylulose-5-phosphate (DXP). This chain is Probable 1-deoxy-D-xylulose-5-phosphate synthase, chloroplastic (TKT2), found in Capsicum annuum (Capsicum pepper).